Reading from the N-terminus, the 316-residue chain is Apolipoprotein E (316 aa).

A signal peptide spans 1 to 18 (MKALWAVLVVTLLAGCLA). 8 tandem repeats follow at residues 76-97 (VLME…EQMG), 98-119 (PMAE…SRLG), 120-141 (ADME…TMLG), 142-163 (QSTE…KRLM), 164-185 (RDAE…EGAE), 186-207 (RGVG…QRTA), 208-229 (NLGA…ARIR), and 230-251 (GRLE…EQME). The segment at 76–251 (VLMEDTMTEL…RLEEVREQME (176 aa)) is 8 X 22 AA approximate tandem repeats. A Methionine sulfoxide modification is found at methionine 139. Serine 143 carries the post-translational modification Phosphoserine. An LDL and other lipoprotein receptors binding region spans residues 154 to 164 (HLRKLRKRLMR). A heparin-binding site is contributed by 158–161 (LRKR). A lipid-binding and lipoprotein association region spans residues 206-286 (TANLGAGAAQ…GWFEPLVEDM (81 aa)). Position 225 to 232 (225 to 232 (GARIRGRL)) interacts with heparin. The homooligomerization stretch occupies residues 262–316 (QQMRLQAEIFQTRLKGWFEPLVEDMQRQWANLMEKIQASVATNPIPPSSVPQESQ). The specificity for association with VLDL stretch occupies residues 274-286 (RLKGWFEPLVEDM).

It belongs to the apolipoprotein A1/A4/E family. In terms of assembly, homotetramer. May interact with ABCA1; functionally associated with ABCA1 in the biogenesis of HDLs. May interact with APP/A4 amyloid-beta peptide; the interaction is extremely stable in vitro but its physiological significance is unclear. May interact with MAPT. May interact with MAP2. In the cerebrospinal fluid, interacts with secreted SORL1. Interacts with PMEL; this allows the loading of PMEL luminal fragment on ILVs to induce fibril nucleation. Post-translationally, APOE exists as multiple glycosylated and sialylated glycoforms within cells and in plasma. The extent of glycosylation and sialylation are tissue and context specific. In terms of processing, glycated in plasma VLDL. Phosphorylated by FAM20C in the extracellular medium.

The protein resides in the secreted. Its subcellular location is the extracellular space. It localises to the extracellular matrix. It is found in the extracellular vesicle. The protein localises to the endosome. The protein resides in the multivesicular body. In terms of biological role, APOE is an apolipoprotein, a protein associating with lipid particles, that mainly functions in lipoprotein-mediated lipid transport between organs via the plasma and interstitial fluids. APOE is a core component of plasma lipoproteins and is involved in their production, conversion and clearance. Apolipoproteins are amphipathic molecules that interact both with lipids of the lipoprotein particle core and the aqueous environment of the plasma. As such, APOE associates with chylomicrons, chylomicron remnants, very low density lipoproteins (VLDL) and intermediate density lipoproteins (IDL) but shows a preferential binding to high-density lipoproteins (HDL). It also binds a wide range of cellular receptors including the LDL receptor/LDLR, the LDL receptor-related proteins LRP1, LRP2 and LRP8 and the very low-density lipoprotein receptor/VLDLR that mediate the cellular uptake of the APOE-containing lipoprotein particles. Finally, APOE also has a heparin-binding activity and binds heparan-sulfate proteoglycans on the surface of cells, a property that supports the capture and the receptor-mediated uptake of APOE-containing lipoproteins by cells. A main function of APOE is to mediate lipoprotein clearance through the uptake of chylomicrons, VLDLs, and HDLs by hepatocytes. APOE is also involved in the biosynthesis by the liver of VLDLs as well as their uptake by peripheral tissues ensuring the delivery of triglycerides and energy storage in muscle, heart and adipose tissues. By participating in the lipoprotein-mediated distribution of lipids among tissues, APOE plays a critical role in plasma and tissues lipid homeostasis. APOE is also involved in two steps of reverse cholesterol transport, the HDLs-mediated transport of cholesterol from peripheral tissues to the liver, and thereby plays an important role in cholesterol homeostasis. First, it is functionally associated with ABCA1 in the biogenesis of HDLs in tissues. Second, it is enriched in circulating HDLs and mediates their uptake by hepatocytes. APOE also plays an important role in lipid transport in the central nervous system, regulating neuron survival and sprouting. This Microtus ochrogaster (Prairie vole) protein is Apolipoprotein E (APOE).